Here is a 205-residue protein sequence, read N- to C-terminus: Ribonuclease HII (205 aa).

An RNase H type-2 domain is found at 1–205 (MLVCGVDEAG…RPARLIEAGG (205 aa)). A divalent metal cation is bound by residues D7, E8, and D105.

It belongs to the RNase HII family. The cofactor is Mn(2+). Requires Mg(2+) as cofactor.

The protein localises to the cytoplasm. The catalysed reaction is Endonucleolytic cleavage to 5'-phosphomonoester.. Its function is as follows. Endonuclease that specifically degrades the RNA of RNA-DNA hybrids. This chain is Ribonuclease HII, found in Cenarchaeum symbiosum (strain A).